Consider the following 457-residue polypeptide: D(1B) dopamine receptor (457 aa).

The Extracellular segment spans residues 1 to 41 (MYQPFQHLDSDQVASWQSPEMLMNKSVSRESQRRKELVAGQ). The N-linked (GlcNAc...) asparagine glycan is linked to Asn-24. Residues 42–67 (IVTGSLLLLLIFWTLFGNILVCTAVM) traverse the membrane as a helical segment. The Cytoplasmic portion of the chain corresponds to 68–78 (RFRHLRSRVTN). Residues 79-105 (IFIVSLAVSDLLVALLVMPWKAVAEVA) form a helical membrane-spanning segment. Residues 106 to 114 (GHWPFGAFC) are Extracellular-facing. The cysteines at positions 114 and 199 are disulfide-linked. The helical transmembrane segment at 115 to 137 (DIWVAFDIMCSTASILNLCVISV) threads the bilayer. The Cytoplasmic segment spans residues 138–156 (DRYWAISSPFRYERKMTQR). Residues 157–181 (VALLMISTAWALSVLISFIPVQLSW) form a helical membrane-spanning segment. Residues 182–205 (HKSETEDHLLSNHSTGNCDSSLNR) lie on the Extracellular side of the membrane. A helical transmembrane segment spans residues 206 to 231 (TYAISSSLISFYIPVAIMIVTYTRIY). The Cytoplasmic segment spans residues 232–282 (RIAQIQIKRISTLERAAEHAQSCRSNRVDSCSRHHQTSLRTSIKKETKVLK). Residues 283–309 (TLSIIMGVFVCCWLPFFILNCMVPFCD) form a helical membrane-spanning segment. Over 310 to 326 (RSPGHPQAGLPCVSETT) the chain is Extracellular. Residues 327–351 (FDIFVWFGWANSSLNPIIYAFNADF) traverse the membrane as a helical segment. Residues 352-457 (RKVFSSLLGC…ITPSMSNGIH (106 aa)) are Cytoplasmic-facing. Cys-361 carries the S-palmitoyl cysteine lipid modification.

The protein belongs to the G-protein coupled receptor 1 family. In terms of tissue distribution, brain and kidney.

The protein resides in the cell membrane. In terms of biological role, dopamine receptor whose activity is mediated by G proteins which activate adenylyl cyclase. In Xenopus laevis (African clawed frog), this protein is D(1B) dopamine receptor (drd5).